The chain runs to 327 residues: MGGGRLPPLWLPLLIAWSEWGNCCLDAPPVVRSPCLQPVRDRNRERNPGSPQLLPYGDRLEVACIFPAHDWPEVSIRVHLCYWPEIVRSLVVDARSGQVLHNDASCYIAGGRWRFEDGGAAQRLSLSFRLITETAGTYTCVLGNETHSLATETTALVADVHDLRHSDRSCDLAFGSRSQTRYLWTPDPSRLRSINCGWEGERHRVVHYIPGTSGLLPSCEEDERELCVPFISQSIADNNCSRRHRVDGARRRYHLRRDYWLTDPKIGLLAAGSVALTSLCHLLCYWCSESYRRLNTEEESEAAEETAAGEASAVAAAAVSEEEQRRE.

Residues 1-23 form the signal peptide; sequence MGGGRLPPLWLPLLIAWSEWGNC. N144 and N239 each carry an N-linked (GlcNAc...) asparagine; by host glycan. Residues 298-327 form a disordered region; that stretch reads EESEAAEETAAGEASAVAAAAVSEEEQRRE. Positions 305–319 are enriched in low complexity; the sequence is ETAAGEASAVAAAAV.

This is an uncharacterized protein from Human cytomegalovirus (strain AD169) (HHV-5).